The sequence spans 188 residues: Dual specificity protein phosphatase 18 (188 aa).

The region spanning 19–160 (GLSQITKSLY…LIHYEFQLFG (142 aa)) is the Tyrosine-protein phosphatase domain. Residues 95-141 (MKQGRTLLHCAAGVSRSAALCLAYLMKYHAMSLLDAHTWTKSCRPII) form a sufficient for mitochondrial localization region. The active-site Phosphocysteine intermediate is the Cys104.

This sequence belongs to the protein-tyrosine phosphatase family. Non-receptor class dual specificity subfamily.

The protein localises to the cytoplasm. Its subcellular location is the nucleus. It localises to the mitochondrion inner membrane. It catalyses the reaction O-phospho-L-tyrosyl-[protein] + H2O = L-tyrosyl-[protein] + phosphate. The enzyme catalyses O-phospho-L-seryl-[protein] + H2O = L-seryl-[protein] + phosphate. The catalysed reaction is O-phospho-L-threonyl-[protein] + H2O = L-threonyl-[protein] + phosphate. Its function is as follows. Can dephosphorylate single and diphosphorylated synthetic MAPK peptides, with preference for the phosphotyrosine and diphosphorylated forms over phosphothreonine. In vitro, dephosphorylates p-nitrophenyl phosphate (pNPP). In Pongo abelii (Sumatran orangutan), this protein is Dual specificity protein phosphatase 18 (DUSP18).